A 273-amino-acid polypeptide reads, in one-letter code: MRLVILETSDSVGKWAAKYVMKRINDFQPSADRYFVLGLPTGSTPLGMYKELIEFHKQGKVSFQYVKTFNMDEYVGLARDHHESYHYFMWNNFFKHIDIEPKNVHILDGNAADLVAECNKFEDQIREAGGVELFIGGIGPDGHIAFNEPGSSLVSRTRVKTLAQDTLEANARFFDNDMSKVPKQALTVGVGTVMDSKEVMILITGAHKAFALYKAIEEGVNHMWTVSAFQQHANTLMICDEDATLELRVKTVKYFKGILRDLDEGSPLEGYKN.

Asp72 serves as the catalytic Proton acceptor; for enolization step. Asp141 functions as the For ring-opening step in the catalytic mechanism. The active-site Proton acceptor; for ring-opening step is His143. Glu148 (for ring-opening step) is an active-site residue.

The protein belongs to the glucosamine/galactosamine-6-phosphate isomerase family. As to quaternary structure, homohexamer.

It is found in the cytoplasm. The catalysed reaction is alpha-D-glucosamine 6-phosphate + H2O = beta-D-fructose 6-phosphate + NH4(+). It functions in the pathway nucleotide-sugar biosynthesis; UDP-N-acetyl-alpha-D-glucosamine biosynthesis; alpha-D-glucosamine 6-phosphate from D-fructose 6-phosphate: step 1/1. Functionally, catalyzes the reversible conversion of alpha-D-glucosamine 6-phosphate (GlcN-6P) into beta-D-fructose 6-phosphate (Fru-6P) and ammonium ion, a regulatory reaction step in de novo uridine diphosphate-N-acetyl-alpha-D-glucosamine (UDP-GlcNAc) biosynthesis via hexosamine pathway. The polypeptide is Glucosamine-6-phosphate deaminase (Drosophila melanogaster (Fruit fly)).